An 887-amino-acid polypeptide reads, in one-letter code: Alanine--tRNA ligase (887 aa).

Residues His-581, His-585, Cys-683, and His-687 each coordinate Zn(2+).

Belongs to the class-II aminoacyl-tRNA synthetase family. It depends on Zn(2+) as a cofactor.

The protein localises to the cytoplasm. The enzyme catalyses tRNA(Ala) + L-alanine + ATP = L-alanyl-tRNA(Ala) + AMP + diphosphate. Functionally, catalyzes the attachment of alanine to tRNA(Ala) in a two-step reaction: alanine is first activated by ATP to form Ala-AMP and then transferred to the acceptor end of tRNA(Ala). Also edits incorrectly charged Ser-tRNA(Ala) and Gly-tRNA(Ala) via its editing domain. The polypeptide is Alanine--tRNA ligase (Ehrlichia ruminantium (strain Gardel)).